Reading from the N-terminus, the 985-residue chain is MAGIVHGILFCGLFGLCWAVTGSRIYPASEVTLLDSRSVQGELGWIASPLEGGWEEVSIMDEKNTPIRTYQVCNVMESSQNNWLRTDWIPRSGAQRVYVEIKFTLRDCNSLPGVMGTCKETFNLYYYESNNDKERFIRETQYVKIDTIAADESFTQVDIGDRIMKLNTEVRDVGPLSKKGFYLAFQDVGACIALVSVRVFYKKCPLTVRNLAQFPDTITGSDTSSLVEVRGSCVDNSEEKDVPKMYCGADGEWLVPIGNCLCNAGFEEHNGGCQACKVGYYKALSTDAACSKCPPHSYALREGSTSCTCDRGYFRADTDPASMPCTRPPSAPQNLISNVNETSVNLEWSPPQNSGGRPDVSYNLVCKRCGSDLTRCSPCGSGVHYSPQQNGLKTTKVSINDLQAHTNYTFEVWAINGVSKQNPEQDQAVSVTVTTNQAAPSTVTQIQPKEITRHSVSLTWPEPERANGVILEYEVKYYEKDQNERSYRIVKTASRSADIKGLNPLTGYVFHVRARTAAGYGEFSGPFEFTTNTVPSPMIGEGTSPTVLLVSVAGSIVLVVILIAAFVISRRRSKYSKAKQEADEEKHLNQGVKTYVDPFTYEDPNQAVREFAKEIDASCIKIEKVIGVGEFGEVCSGRLKVPGKREIYVAIKTLKAGYTDKQRRDFLSEASIMGQFDHPNIIHLEGVVTKCKPVMIITEYMENGSLDAFLRKNDGRFTVIQLVGMLRGIGSGMKYLSDMSYVHRDLAARNILVNSNLVCKVSDFGMSRVLEDDPEAAYTTRGGKIPIRWTAPEAIAYRKFTSASDVWSYGIVMWEVMSYGERPYWDMSNQDVIKAIEEGYRLPPPMDCPIALHQLMLDCWQKDRSDRPKFGQIVSMLDKLIRNPNSLKRTGLENSRTNTALLDPSSPEWSQVASVLDWLQASKWKRYKDNFTAAGYTSLEAVVHVNQDDLTRIGISSPSHQNKILSSVQGMRTQLQQMQGRMVPV.

The N-terminal stretch at 1–20 (MAGIVHGILFCGLFGLCWAV) is a signal peptide. Over 21–547 (TGSRIYPASE…MIGEGTSPTV (527 aa)) the chain is Extracellular. Residues 30-209 (EVTLLDSRSV…FYKKCPLTVR (180 aa)) form the Eph LBD domain. 2 Fibronectin type-III domains span residues 328–438 (PPSA…TNQA) and 439–536 (APST…TVPS). 2 N-linked (GlcNAc...) asparagine glycosylation sites follow: asparagine 340 and asparagine 407. Residues 548 to 569 (LLVSVAGSIVLVVILIAAFVIS) form a helical membrane-spanning segment. Residues 570–985 (RRRSKYSKAK…QQMQGRMVPV (416 aa)) lie on the Cytoplasmic side of the membrane. Tyrosine 595 and tyrosine 601 each carry phosphotyrosine; by autocatalysis. One can recognise a Protein kinase domain in the interval 620-881 (IKIEKVIGVG…QIVSMLDKLI (262 aa)). Residues 626-634 (IGVGEFGEV) and lysine 652 contribute to the ATP site. Aspartate 745 serves as the catalytic Proton acceptor. Phosphotyrosine; by autocatalysis occurs at positions 778 and 927. An SAM domain is found at 910 to 974 (SQVASVLDWL…LSSVQGMRTQ (65 aa)). The short motif at 983 to 985 (VPV) is the PDZ-binding element.

It belongs to the protein kinase superfamily. Tyr protein kinase family. Ephrin receptor subfamily. In terms of tissue distribution, localized expression in a subset of neural crest and neural tissues in embryos.

The protein resides in the cell membrane. It is found in the early endosome. The enzyme catalyses L-tyrosyl-[protein] + ATP = O-phospho-L-tyrosyl-[protein] + ADP + H(+). Receptor tyrosine kinase which binds membrane-bound ephrin family ligands residing on adjacent cells, leading to contact-dependent bidirectional signaling into neighboring cells. The signaling pathway downstream of the receptor is referred to as forward signaling while the signaling pathway downstream of the ephrin ligand is referred to as reverse signaling. Highly promiscuous, it has the unique property among Eph receptors to bind and to be physiologically activated by both GPI-anchored ephrin-A and transmembrane ephrin-B ligands including EFNA1 and EFNB3. Upon activation by ephrin ligands, modulates cell morphology and integrin-dependent cell adhesion through regulation of the Rac, Rap and Rho GTPases activity. Plays an important role in the development of the nervous system controlling different steps of axonal guidance including the establishment of the corticospinal projections. The polypeptide is Ephrin type-A receptor 4-B (epha4-b) (Xenopus laevis (African clawed frog)).